Here is a 694-residue protein sequence, read N- to C-terminus: Beta-mannosyltransferase 8 (694 aa).

Over 1–11 (MKFPKLRKRTV) the chain is Cytoplasmic. A helical transmembrane segment spans residues 12–29 (YWAVLTVFALFTIHFVFQ). Topologically, residues 30-694 (YKEHNSHRVQ…YLYDHASVNS (665 aa)) are extracellular. Residues Asn-101 and Asn-542 are each glycosylated (N-linked (GlcNAc...) asparagine).

This sequence belongs to the BMT family.

It is found in the membrane. Beta-mannosyltransferase involved in cell wall biosynthesis through beta-1,2-mannosylation of cell wall phosphopeptidomannan. Plays a role in the ability to produce hyphae in the presence of three bacterial species. This is Beta-mannosyltransferase 8 (BMT8) from Candida albicans (strain SC5314 / ATCC MYA-2876) (Yeast).